Reading from the N-terminus, the 484-residue chain is Ribosome biogenesis protein YTM1 (484 aa).

The tract at residues Val11–Arg94 is ubiquitin-like (UBL) domain. WD repeat units lie at residues Ser121–Ser160, Gly166–Ser204, Gly215–Ala254, Val289–Thr329, Thr331–Ser372, Gly378–Gly418, and Gly448–Ser484.

This sequence belongs to the WD repeat WDR12/YTM1 family. In terms of assembly, component of the NOP7 complex, composed of ERB1, NOP7 and YTM1. The complex is held together by ERB1, which interacts with NOP7 via its N-terminal domain and with YTM1 via a high-affinity interaction between the seven-bladed beta-propeller domains of the 2 proteins. The NOP7 complex associates with the 66S pre-ribosome. Interacts (via UBL domain) with MDN1 (via VWFA/MIDAS domain).

The protein resides in the nucleus. Its subcellular location is the nucleolus. It is found in the nucleoplasm. In terms of biological role, component of the NOP7 complex, which is required for maturation of the 25S and 5.8S ribosomal RNAs and formation of the 60S ribosome. This is Ribosome biogenesis protein YTM1 from Pyricularia oryzae (strain 70-15 / ATCC MYA-4617 / FGSC 8958) (Rice blast fungus).